A 442-amino-acid chain; its full sequence is Methionine aminopeptidase 2 (442 aa).

Positions 1-81 (MAAQAPTEAL…APTAQSDPPR (81 aa)) are disordered. Positions 56–72 (PLRRRRRRRRTRKKKKA) are enriched in basic residues. H196 lines the substrate pocket. Residues D216, D227, and H296 each coordinate a divalent metal cation. H304 serves as a coordination point for substrate. A divalent metal cation is bound by residues E329 and E423.

Belongs to the peptidase M24A family. Methionine aminopeptidase eukaryotic type 2 subfamily. The cofactor is Co(2+). Zn(2+) serves as cofactor. Mn(2+) is required as a cofactor. Requires Fe(2+) as cofactor.

Its subcellular location is the cytoplasm. The enzyme catalyses Release of N-terminal amino acids, preferentially methionine, from peptides and arylamides.. Cotranslationally removes the N-terminal methionine from nascent proteins. The N-terminal methionine is often cleaved when the second residue in the primary sequence is small and uncharged (Met-Ala-, Cys, Gly, Pro, Ser, Thr, or Val). This Verticillium alfalfae (strain VaMs.102 / ATCC MYA-4576 / FGSC 10136) (Verticillium wilt of alfalfa) protein is Methionine aminopeptidase 2.